Consider the following 247-residue polypeptide: MPRYRLTVEYDGSDYVGWQRQENGPSVQGAIEKAVLSLTGETVSIRGAGRTDSGVHAMGQVAHLDLTREWKTHTLRNALNAHLALAAERVSILDAAEVPPEFDARFSAIRRHYLYRIISRRSPLALEARRAWWVPKTLDHEAMHEAAQHLVGHHDFTTFRSAHCQANSPLRTIDRLDVTRSGELIEIRATAQSFLHNQIRSFAGSLKLVGEGKWTPDDLKTALEARDRKACGPVAPPEGLFFMQVDY.

Aspartate 52 acts as the Nucleophile in catalysis. Tyrosine 113 provides a ligand contact to substrate.

This sequence belongs to the tRNA pseudouridine synthase TruA family. Homodimer.

It catalyses the reaction uridine(38/39/40) in tRNA = pseudouridine(38/39/40) in tRNA. Functionally, formation of pseudouridine at positions 38, 39 and 40 in the anticodon stem and loop of transfer RNAs. This chain is tRNA pseudouridine synthase A, found in Sinorhizobium fredii (strain NBRC 101917 / NGR234).